The sequence spans 77 residues: Translation initiation factor IF-1, chloroplastic (77 aa).

The S1-like domain occupies 1 to 71; sequence MKEQKLIHEG…TKGRIIYRLR (71 aa).

It belongs to the IF-1 family. Component of the 30S ribosomal translation pre-initiation complex which assembles on the 30S ribosome in the order IF-2 and IF-3, IF-1 and N-formylmethionyl-tRNA(fMet); mRNA recruitment can occur at any time during PIC assembly.

Its subcellular location is the plastid. It is found in the chloroplast. In terms of biological role, one of the essential components for the initiation of protein synthesis. Stabilizes the binding of IF-2 and IF-3 on the 30S subunit to which N-formylmethionyl-tRNA(fMet) subsequently binds. Helps modulate mRNA selection, yielding the 30S pre-initiation complex (PIC). Upon addition of the 50S ribosomal subunit IF-1, IF-2 and IF-3 are released leaving the mature 70S translation initiation complex. This Dioscorea elephantipes (Elephant's foot yam) protein is Translation initiation factor IF-1, chloroplastic.